The chain runs to 428 residues: Sialidase-3 (428 aa).

The short motif at 24-27 (YRIP) is the FRIP motif element. Substrate contacts are provided by arginine 25 and arginine 45. Residue aspartate 50 is the Proton acceptor of the active site. One copy of the BNR 1 repeat lies at 129 to 140 (ICSQDAGYSWSD). Tyrosine 179 and tyrosine 181 together coordinate substrate. The stretch at 203-214 (IYSDDLGATWHH) is one BNR 2 repeat. Substrate contacts are provided by glutamate 225 and arginine 245. The BNR 3 repeat unit spans residues 254–265 (ALSIDHGECFQK). Serine 314 is subject to Phosphoserine. Arginine 341 lines the substrate pocket. Residue tyrosine 371 is the Nucleophile of the active site. Glutamate 388 is an active-site residue.

It belongs to the glycosyl hydrolase 33 family. In terms of assembly, interacts with CAV1; this interaction enhances NEU3 sialidase activity within caveola. Interacts with EGFR; this interaction mediates desialylation of EGFR and enhances downstream signaling. Post-translationally, palmitoylated; may regulate intracellular trafficking and anchorage to plasma membrane and endomembranes. As to expression, expressed in brain.

The protein resides in the cell membrane. The protein localises to the membrane. It is found in the caveola. Its subcellular location is the early endosome membrane. It localises to the recycling endosome membrane. The protein resides in the lysosome membrane. The enzyme catalyses Hydrolysis of alpha-(2-&gt;3)-, alpha-(2-&gt;6)-, alpha-(2-&gt;8)- glycosidic linkages of terminal sialic acid residues in oligosaccharides, glycoproteins, glycolipids, colominic acid and synthetic substrates.. It catalyses the reaction a ganglioside GD1a + H2O = a ganglioside GM1 + N-acetylneuraminate. It carries out the reaction a ganglioside GD1a (d18:1(4E)) + H2O = a ganglioside GM1 (d18:1(4E)) + N-acetylneuraminate. The catalysed reaction is a ganglioside GD1b + H2O = a ganglioside GM1 + N-acetylneuraminate. The enzyme catalyses a ganglioside GD1b (d18:1(4E)) + H2O = a ganglioside GM1 (d18:1(4E)) + N-acetylneuraminate. It catalyses the reaction a ganglioside GD3 + H2O = a ganglioside GM3 + N-acetylneuraminate. It carries out the reaction a ganglioside GD3 (d18:1(4E)) + H2O = a ganglioside GM3 (d18:1(4E)) + N-acetylneuraminate. The catalysed reaction is a ganglioside GM3 + H2O = a beta-D-galactosyl-(1-&gt;4)-beta-D-glucosyl-(1&lt;-&gt;1)-ceramide + N-acetylneuraminate. The enzyme catalyses a ganglioside GM1 + H2O = a ganglioside GA1 + N-acetylneuraminate. It catalyses the reaction a ganglioside GM1 (d18:1(4E)) + H2O = a ganglioside GA1 (d18:1(4E)) + N-acetylneuraminate. It carries out the reaction a ganglioside GM2 (d18:1(4E)) + H2O = a ganglioside GA2 (d18:1(4E)) + N-acetylneuraminate. The catalysed reaction is a ganglioside GM3 (d18:1(4E)) + H2O = a beta-D-Gal-(1-&gt;4)-beta-D-Glc-(1&lt;-&gt;1)-Cer(d18:1(4E)) + N-acetylneuraminate. The enzyme catalyses a ganglioside GT1b + H2O = a ganglioside GD1b + N-acetylneuraminate. In terms of biological role, exo-alpha-sialidase that catalyzes the hydrolytic cleavage of the terminal sialic acid (N-acetylneuraminic acid, Neu5Ac) of a glycan moiety in the catabolism of glycolipids, glycoproteins and oligosacharides. Displays high catalytic efficiency for gangliosides including alpha-(2-&gt;3)-sialylated GD1a and GM3 and alpha-(2-&gt;8)-sialylated GD3. Plays a role in the regulation of transmembrane signaling through the modulation of ganglioside content of the lipid bilayer and by direct interaction with signaling receptors, such as EGFR. Desialylates EGFR and activates downstream signaling in proliferating cells. Contributes to clathrin-mediated endocytosis by regulating sorting of endocytosed receptors to early and recycling endosomes. This is Sialidase-3 (NEU3) from Bos taurus (Bovine).